A 619-amino-acid polypeptide reads, in one-letter code: MAAAPPLSKAEYLKRYLSGADAGVDRGSESGRKRRKKRPKPGGAGGKGMRIVDDDVSWTAISTTKLEKEEEEDDGDLPVVAEFVDERPEEVKQMEAFRSSAKWKLLGGHNEDLPSNRHFRHDTPDSSPRRVRHGTPDPSPRKDRHDTPDPSPRRARHDTPDPSPLRGARHDSDTSPPRRIRHDSSDTSPPRRARHDSPDPSPPRRPQHNSSGASPRRVRHDSPDPSPPRRARHGSSDISSPRRVHNNSPDTSRRTLGSSDTQQLRRARHDSPDLAPNVTYSLPRTKSGKAPERASSKTSPHWKESGASHLSFPKNSKYEYDPDISPPRKKQAKSHFGDKKQLDSKGDCQKATDSDLSSPRHKQSPGHQDSDSDLSPPRNRPRHRSSDSDLSPPRRRQRTKSSDSDLSPPRRSQPPGKKAAHMYSGAKTGLVLTDIQREQQELKEQDQETMAFEAEFQYAETVFRDKSGRKRNLKLERLEQRRKAEKDSERDELYAQWGKGLAQSRQQQQNVEDAMKEMQKPLARYIDDEDLDRMLREQEREGDPMANFIKKNKAKENKNKKVRPRYSGPAPPPNRFNIWPGYRWDGVDRSNGFEQKRFARLASKKAVEELAYKWSVEDM.

Residues 20-56 (ADAGVDRGSESGRKRRKKRPKPGGAGGKGMRIVDDDV) are disordered. A Phosphoserine modification is found at serine 28. Residue lysine 65 forms a Glycyl lysine isopeptide (Lys-Gly) (interchain with G-Cter in SUMO2) linkage. Positions 106–429 (LGGHNEDLPS…AHMYSGAKTG (324 aa)) are disordered. The segment covering 109–128 (HNEDLPSNRHFRHDTPDSSP) has biased composition (basic and acidic residues). Threonine 123 carries the phosphothreonine modification. The residue at position 127 (serine 127) is a Phosphoserine. The residue at position 135 (threonine 135) is a Phosphothreonine. Phosphoserine is present on serine 139. Over residues 139-160 (SPRKDRHDTPDPSPRRARHDTP) the composition is skewed to basic and acidic residues. A Phosphothreonine modification is found at threonine 147. Phosphoserine is present on serine 151. Position 159 is a phosphothreonine (threonine 159). A phosphoserine mark is found at serine 163, serine 172, serine 175, serine 197, serine 201, serine 214, serine 222, serine 226, serine 235, serine 236, serine 240, serine 248, serine 258, serine 259, serine 271, and serine 281. Polar residues predominate over residues 246–264 (NNSPDTSRRTLGSSDTQQL). Basic and acidic residues predominate over residues 289-306 (KAPERASSKTSPHWKESG). Serine 325 is modified (phosphoserine). A compositionally biased stretch (basic and acidic residues) spans 335–353 (HFGDKKQLDSKGDCQKATD). Serine 354, serine 357, serine 358, serine 391, and serine 407 each carry phosphoserine. Positions 404–415 (SDLSPPRRSQPP) are enriched in low complexity. The stretch at 433-520 (TDIQREQQEL…VEDAMKEMQK (88 aa)) forms a coiled coil. Tyrosine 494 is modified (phosphotyrosine). Positions 538-578 (QEREGDPMANFIKKNKAKENKNKKVRPRYSGPAPPPNRFNI) are disordered. Position 567 is a phosphoserine (serine 567).

This sequence belongs to the CWC26 family. As to quaternary structure, part of the activated spliceosome B/catalytic step 1 spliceosome, one of the forms of the spliceosome which has a well-formed active site but still cannot catalyze the branching reaction and is composed of at least 52 proteins, the U2, U5 and U6 snRNAs and the pre-mRNA. Component of the minor spliceosome, which splices U12-type introns.

The protein localises to the nucleus. In terms of biological role, involved in pre-mRNA splicing as component of the activated spliceosome. As a component of the minor spliceosome, involved in the splicing of U12-type introns in pre-mRNAs. This Homo sapiens (Human) protein is BUD13 homolog (BUD13).